A 104-amino-acid chain; its full sequence is Large ribosomal subunit protein bL21 (104 aa).

It belongs to the bacterial ribosomal protein bL21 family. Part of the 50S ribosomal subunit. Contacts protein L20.

In terms of biological role, this protein binds to 23S rRNA in the presence of protein L20. The protein is Large ribosomal subunit protein bL21 of Streptococcus gordonii (strain Challis / ATCC 35105 / BCRC 15272 / CH1 / DL1 / V288).